The chain runs to 721 residues: Catalase-peroxidase (721 aa).

Positions 89–212 (WHSAGTYRTG…LAAVQMGLIY (124 aa)) form a cross-link, tryptophyl-tyrosyl-methioninium (Trp-Tyr) (with M-238). Catalysis depends on H90, which acts as the Proton acceptor. Residues 212 to 238 (YVNPEGPNGDPDPFAAAVDIRETFARM) constitute a cross-link (tryptophyl-tyrosyl-methioninium (Tyr-Met) (with W-89)). H253 is a heme b binding site.

Belongs to the peroxidase family. Peroxidase/catalase subfamily. Homodimer or homotetramer. The cofactor is heme b. Post-translationally, formation of the three residue Trp-Tyr-Met cross-link is important for the catalase, but not the peroxidase activity of the enzyme.

It catalyses the reaction H2O2 + AH2 = A + 2 H2O. It carries out the reaction 2 H2O2 = O2 + 2 H2O. Its function is as follows. Bifunctional enzyme with both catalase and broad-spectrum peroxidase activity. The protein is Catalase-peroxidase of Shewanella baltica (strain OS195).